A 221-amino-acid polypeptide reads, in one-letter code: Ras-related protein Rab-27A (221 aa).

At Ser2 the chain carries N-acetylserine. Position 2 is a phosphoserine (Ser2). 16-24 (GDSGVGKTS) provides a ligand contact to GTP. Positions 38–46 (FITTVGIDF) match the Effector region motif. GTP is bound by residues 74 to 78 (DTAGQ), 133 to 136 (NKSD), and 163 to 165 (SAA). Residues Cys123 and Cys188 are joined by a disulfide bond. S-geranylgeranyl cysteine attachment occurs at residues Cys219 and Cys221. Cys221 carries the cysteine methyl ester modification.

Belongs to the small GTPase superfamily. Rab family. In terms of assembly, binds SYTL1, SLAC2B, MYRIP, SYTL3, SYTL4 and SYTL5. Interacts with RPH3A and RPH3A. Binds MLPH and SYTL2. Interacts with UNC13D. Does not interact with the BLOC-3 complex (heterodimer of HPS1 and HPS4). Interacts (GDP-bound form preferentially) with DENND10. Found in all the examined tissues except in brain. Low expression was found in thymus, kidney, muscle and placenta. Detected in melanocytes, and in most tumor cell lines examined. Expressed in cytotoxic T-lymphocytes (CTL) and mast cells.

The protein localises to the membrane. Its subcellular location is the melanosome. It localises to the late endosome. The protein resides in the lysosome. The catalysed reaction is GTP + H2O = GDP + phosphate + H(+). With respect to regulation, regulated by guanine nucleotide exchange factors (GEFs) which promote the exchange of bound GDP for free GTP, GTPase activating proteins (GAPs) which increase the GTP hydrolysis activity, and GDP dissociation inhibitors which inhibit the dissociation of the nucleotide from the GTPase. Activated by GEFs such as DENND10. In terms of biological role, small GTPase which cycles between active GTP-bound and inactive GDP-bound states. In its active state, binds to a variety of effector proteins to regulate homeostasis of late endocytic pathway, including endosomal positioning, maturation and secretion. Plays a role in cytotoxic granule exocytosis in lymphocytes. Required for both granule maturation and granule docking and priming at the immunologic synapse. The protein is Ras-related protein Rab-27A (RAB27A) of Homo sapiens (Human).